A 69-amino-acid chain; its full sequence is MFGLGGQELVLILLIVLLLFGAQKLPELAKGLGKGMKEFKRAQNEIEEEFNKSMDDNPKKEKATTASKS.

The chain crosses the membrane as a helical span at residues 1–21; the sequence is MFGLGGQELVLILLIVLLLFG. Residues 47–63 show a composition bias toward basic and acidic residues; the sequence is EEEFNKSMDDNPKKEKA. Residues 47–69 form a disordered region; the sequence is EEEFNKSMDDNPKKEKATTASKS.

The protein belongs to the TatA/E family. In terms of assembly, forms a complex with TatC.

Its subcellular location is the cell inner membrane. Functionally, part of the twin-arginine translocation (Tat) system that transports large folded proteins containing a characteristic twin-arginine motif in their signal peptide across membranes. TatA could form the protein-conducting channel of the Tat system. In Chlorobium chlorochromatii (strain CaD3), this protein is Sec-independent protein translocase protein TatA.